Here is a 578-residue protein sequence, read N- to C-terminus: Sulfite reductase [NADPH] hemoprotein beta-component (578 aa).

4 residues coordinate [4Fe-4S] cluster: C441, C447, C487, and C491. C491 lines the siroheme pocket.

Belongs to the nitrite and sulfite reductase 4Fe-4S domain family. As to quaternary structure, alpha(8)-beta(8). The alpha component is a flavoprotein, the beta component is a hemoprotein. It depends on siroheme as a cofactor. [4Fe-4S] cluster is required as a cofactor.

It catalyses the reaction hydrogen sulfide + 3 NADP(+) + 3 H2O = sulfite + 3 NADPH + 4 H(+). It functions in the pathway sulfur metabolism; hydrogen sulfide biosynthesis; hydrogen sulfide from sulfite (NADPH route): step 1/1. In terms of biological role, component of the sulfite reductase complex that catalyzes the 6-electron reduction of sulfite to sulfide. This is one of several activities required for the biosynthesis of L-cysteine from sulfate. This is Sulfite reductase [NADPH] hemoprotein beta-component from Vibrio parahaemolyticus serotype O3:K6 (strain RIMD 2210633).